Consider the following 299-residue polypeptide: Ribonuclease 3-like protein 3 (299 aa).

The RNase III domain occupies 39–183 (VAAVESLLGY…LIGAIYCDSN (145 aa)). The Mg(2+) site is built by glutamate 79, aspartate 169, and glutamate 172. The 65-residue stretch at 209–273 (HPVSELFEFC…AKAALDKLKE (65 aa)) folds into the DRBM domain. The interval 274–299 (TLGQSQTEPMSAEVSEQFNKIDLTGS) is disordered. The segment covering 275-291 (LGQSQTEPMSAEVSEQF) has biased composition (polar residues).

Mg(2+) serves as cofactor. Requires Mn(2+) as cofactor.

Its function is as follows. Cleaves double-stranded RNA (dsRNA). In Oryza sativa subsp. japonica (Rice), this protein is Ribonuclease 3-like protein 3.